A 317-amino-acid polypeptide reads, in one-letter code: UV DNA damage endonuclease (317 aa).

The protein belongs to the uve1/UvsE family.

Component in a DNA repair pathway. Removal of UV LIGHT damaged nucleotides. Recognizes pyrimidine dimers and cleave a phosphodiester bond immediately 5' to the lesion. The chain is UV DNA damage endonuclease from Bacillus cereus (strain ATCC 10987 / NRS 248).